We begin with the raw amino-acid sequence, 67 residues long: MKLIEERTYEERLYIYSDDIEARKHFVSELKPKGWMVDNCWVGIDLNQIKQFYRFKRELTDDYVFNR.

This chain is SPbeta prophage-derived uncharacterized protein YoqK (yoqK), found in Bacillus subtilis (strain 168).